A 433-amino-acid chain; its full sequence is Protein arginine N-methyltransferase 2 (433 aa).

The disordered stretch occupies residues methionine 1–cysteine 20. Interaction with ESR1 regions lie at residues methionine 1 to lysine 277 and lysine 133 to alanine 275. The region spanning valine 30–aspartate 89 is the SH3 domain. An asymmetric dimethylarginine mark is found at arginine 61 and arginine 72. The interaction with RB1 stretch occupies residues histidine 83 to valine 207. The SAM-dependent MTase PRMT-type domain occupies aspartate 99–tryptophan 432. S-adenosyl-L-methionine-binding residues include histidine 112, arginine 121, glycine 145, glutamate 168, and glutamate 197. Active-site residues include glutamate 211 and glutamate 220.

Belongs to the class I-like SAM-binding methyltransferase superfamily. Protein arginine N-methyltransferase family. As to quaternary structure, self-associates. Interacts with RB1 and E2F1. Interacts with NCOA6 coactivator. Interacts (via SH3 domain) with PRMT8. Interacts with AR. Interacts with NFKBIA. Interacts with ESR1, ESR2, PGR, PPARG, RARA, RXRA and THRB. Interacts with HNRNPUL1. Widely expressed. Highly expressed in androgen target organs such as heart, prostate, skeletal muscle, ovary and spinal cord.

The protein resides in the cytoplasm. It is found in the nucleus. Its subcellular location is the nucleolus. The enzyme catalyses L-arginyl-[protein] + 2 S-adenosyl-L-methionine = N(omega),N(omega)-dimethyl-L-arginyl-[protein] + 2 S-adenosyl-L-homocysteine + 2 H(+). Its function is as follows. Arginine methyltransferase that methylates the guanidino nitrogens of arginyl residues in proteins such as STAT3, FBL, histone H4. Acts as a coactivator (with NCOA2) of the androgen receptor (AR)-mediated transactivation. Acts as a coactivator (with estrogen) of estrogen receptor (ER)-mediated transactivation. Enhances PGR, PPARG, RARA-mediated transactivation. May inhibit NF-kappa-B transcription and promote apoptosis. Represses E2F1 transcriptional activity (in a RB1-dependent manner). May be involved in growth regulation. This is Protein arginine N-methyltransferase 2 (PRMT2) from Homo sapiens (Human).